The following is a 275-amino-acid chain: NH(3)-dependent NAD(+) synthetase (275 aa).

46–53 (GISGGQDS) provides a ligand contact to ATP. Residue Asp-52 coordinates Mg(2+). Arg-140 serves as a coordination point for deamido-NAD(+). Thr-160 lines the ATP pocket. Glu-165 is a Mg(2+) binding site. Residues Lys-173 and Asp-180 each coordinate deamido-NAD(+). 2 residues coordinate ATP: Lys-189 and Thr-211. 260 to 261 (HK) serves as a coordination point for deamido-NAD(+).

The protein belongs to the NAD synthetase family. As to quaternary structure, homodimer.

It carries out the reaction deamido-NAD(+) + NH4(+) + ATP = AMP + diphosphate + NAD(+) + H(+). Its pathway is cofactor biosynthesis; NAD(+) biosynthesis; NAD(+) from deamido-NAD(+) (ammonia route): step 1/1. Functionally, catalyzes the ATP-dependent amidation of deamido-NAD to form NAD. Uses ammonia as a nitrogen source. This Cronobacter sakazakii (strain ATCC BAA-894) (Enterobacter sakazakii) protein is NH(3)-dependent NAD(+) synthetase.